A 675-amino-acid chain; its full sequence is Zeaxanthin epoxidase, chloroplastic (675 aa).

The transit peptide at methionine 1–serine 25 directs the protein to the chloroplast. FAD contacts are provided by residues arginine 92 to glutamate 120 and lysine 370 to aspartate 383. Residues isoleucine 558–glycine 622 enclose the FHA domain.

FAD is required as a cofactor.

It localises to the plastid. Its subcellular location is the chloroplast thylakoid membrane. It catalyses the reaction all-trans-zeaxanthin + 4 reduced [2Fe-2S]-[ferredoxin] + 2 O2 + 4 H(+) = all-trans-violaxanthin + 4 oxidized [2Fe-2S]-[ferredoxin] + 2 H2O. It participates in plant hormone biosynthesis; abscisate biosynthesis. With respect to regulation, inhibited by diphenyleneiodonium (DPI). In terms of biological role, converts zeaxanthin into antheraxanthin and subsequently violaxanthin. Involved in the epoxidation of zeaxanthin. The chain is Zeaxanthin epoxidase, chloroplastic from Spinacia oleracea (Spinach).